Here is a 450-residue protein sequence, read N- to C-terminus: Isoleucine 2-epimerase (450 aa).

Residues 115 to 116 (GS), Y142, and 250 to 253 (DEVN) each bind pyridoxal 5'-phosphate. N6-(pyridoxal phosphate)lysine is present on K280. Residue T309 participates in pyridoxal 5'-phosphate binding.

Belongs to the class-III pyridoxal-phosphate-dependent aminotransferase family. Homotetramer. Pyridoxal 5'-phosphate is required as a cofactor.

The catalysed reaction is L-isoleucine = D-allo-isoleucine. Its function is as follows. Catalyzes the epimerization of L-isoleucine to D-allo-isoleucine and D-allo-isoleucine to L-isoleucine. Can also catalyze the racemization of many nonpolar amino acids, including leucine and valine. Does not have GABA aminotransferase activity. The chain is Isoleucine 2-epimerase from Lentilactobacillus buchneri (Lactobacillus buchneri).